Consider the following 129-residue polypeptide: Gem-associated protein 7 (129 aa).

Met-1 bears the N-acetylmethionine mark. Positions 1 to 31 (MQSPLTIPVPVPVLRLPRGPDGFSRGFASDG) constitute an SUZ-C domain. Positions 63-129 (RYLRSLLAMV…SDIISYSFKL (67 aa)) constitute a Sm domain.

Belongs to the gemin-7 family. In terms of assembly, part of the core SMN complex that contains SMN1, GEMIN2/SIP1, DDX20/GEMIN3, GEMIN4, GEMIN5, GEMIN6, GEMIN7, GEMIN8 and STRAP/UNRIP. Part of the SMN-Sm complex that contains SMN1, GEMIN2/SIP1, DDX20/GEMIN3, GEMIN4, GEMIN5, GEMIN6, GEMIN7, GEMIN8, STRAP/UNRIP and the Sm proteins SNRPB, SNRPD1, SNRPD2, SNRPD3, SNRPE, SNRPF and SNRPG. Interacts with GEMIN6; the interaction is direct. Interacts with STRAP/UNRIP; the interaction is direct. Interacts with GEMIN8; the interaction is direct. Interacts with SNRPB, SNRPD2, SNRPD3 and SNRPE; the interaction is direct.

The protein localises to the nucleus. Its subcellular location is the nucleoplasm. It localises to the gem. The protein resides in the cytoplasm. Its function is as follows. The SMN complex catalyzes the assembly of small nuclear ribonucleoproteins (snRNPs), the building blocks of the spliceosome, and thereby plays an important role in the splicing of cellular pre-mRNAs. Most spliceosomal snRNPs contain a common set of Sm proteins SNRPB, SNRPD1, SNRPD2, SNRPD3, SNRPE, SNRPF and SNRPG that assemble in a heptameric protein ring on the Sm site of the small nuclear RNA to form the core snRNP (Sm core). In the cytosol, the Sm proteins SNRPD1, SNRPD2, SNRPE, SNRPF and SNRPG are trapped in an inactive 6S pICln-Sm complex by the chaperone CLNS1A that controls the assembly of the core snRNP. To assemble core snRNPs, the SMN complex accepts the trapped 5Sm proteins from CLNS1A forming an intermediate. Binding of snRNA inside 5Sm triggers eviction of the SMN complex, thereby allowing binding of SNRPD3 and SNRPB to complete assembly of the core snRNP. The polypeptide is Gem-associated protein 7 (Gemin7) (Mus musculus (Mouse)).